A 329-amino-acid polypeptide reads, in one-letter code: Peroxidase 17 (329 aa).

The signal sequence occupies residues 1–19 (MSLLPHLILYLTLLTVVVT). 4 disulfides stabilise this stretch: Cys32–Cys112, Cys65–Cys70, Cys118–Cys315, and Cys197–Cys229. The active-site Proton acceptor is His63. 5 residues coordinate Ca(2+): Asp64, Val67, Gly69, Asp71, and Ser73. Pro160 contacts substrate. 2 N-linked (GlcNAc...) asparagine glycosylation sites follow: Asn165 and Asn177. A heme b-binding site is contributed by His190. Ser191 contributes to the Ca(2+) binding site. 2 N-linked (GlcNAc...) asparagine glycosylation sites follow: Asn206 and Asn236. The Ca(2+) site is built by Asp242, Thr244, and Asp249.

The protein belongs to the peroxidase family. Classical plant (class III) peroxidase subfamily. Heme b serves as cofactor. Ca(2+) is required as a cofactor.

It localises to the secreted. Its subcellular location is the vacuole. The enzyme catalyses 2 a phenolic donor + H2O2 = 2 a phenolic radical donor + 2 H2O. Removal of H(2)O(2), oxidation of toxic reductants, biosynthesis and degradation of lignin, suberization, auxin catabolism, response to environmental stresses such as wounding, pathogen attack and oxidative stress. These functions might be dependent on each isozyme/isoform in each plant tissue. The protein is Peroxidase 17 (PER17) of Arabidopsis thaliana (Mouse-ear cress).